A 38-amino-acid polypeptide reads, in one-letter code: Potassium channel toxin alpha-KTx 3.12 (38 aa).

3 cysteine pairs are disulfide-bonded: Cys8–Cys28, Cys14–Cys33, and Cys18–Cys35. Lys38 carries the lysine amide modification.

The protein belongs to the short scorpion toxin superfamily. Potassium channel inhibitor family. Alpha-KTx 03 subfamily. In terms of tissue distribution, expressed by the venom gland.

The protein localises to the secreted. Functionally, potent inhibitor of voltage-dependent potassium channels, with a preference for Kv1.3/KCNA3 versus Kv1.2/KCNA2. The chain is Potassium channel toxin alpha-KTx 3.12 from Androctonus amoreuxi (African fattail scorpion).